Consider the following 311-residue polypeptide: Porphobilinogen deaminase (311 aa).

Cys-242 is modified (S-(dipyrrolylmethanemethyl)cysteine).

Belongs to the HMBS family. As to quaternary structure, monomer. The cofactor is dipyrromethane.

The enzyme catalyses 4 porphobilinogen + H2O = hydroxymethylbilane + 4 NH4(+). Its pathway is porphyrin-containing compound metabolism; protoporphyrin-IX biosynthesis; coproporphyrinogen-III from 5-aminolevulinate: step 2/4. Its function is as follows. Tetrapolymerization of the monopyrrole PBG into the hydroxymethylbilane pre-uroporphyrinogen in several discrete steps. The sequence is that of Porphobilinogen deaminase (hemC) from Neisseria meningitidis serogroup B (strain ATCC BAA-335 / MC58).